Consider the following 451-residue polypeptide: V-type proton ATPase subunit S1 (451 aa).

The signal sequence occupies residues 1-16 (MRVLFAVFSLIMACQA). Residues 17-407 (YDAVLFSNSR…DCTGTFSSGS (391 aa)) lie on the Lumenal side of the membrane. N191, N235, N249, and N330 each carry an N-linked (GlcNAc...) asparagine glycan. A helical membrane pass occupies residues 408–428 (WMGIVSALVLIAGLMFGYVML). Over 429–451 (QSVQTMDRFDDPKQRQIVINVRE) the chain is Cytoplasmic.

The protein belongs to the vacuolar ATPase subunit S1 family. As to quaternary structure, accessory component of the multisubunit proton-transporting vacuolar (V)-ATPase protein pump. Expressed in pharynx, hypodermis, intestine, vulval hypodermis and the H-shape excretory cell.

It localises to the membrane. Accessory subunit of the proton-transporting vacuolar (V)-ATPase protein pump, which is required for luminal acidification of secretory vesicles. In the germline, required for the trafficking of the receptor RME-2 to the oocyte cell membrane where it regulates the uptake of yolk proteins. Also, plays an essential role in osmoregulation in the embryo, probably by regulating the proper formation of the eggshell. This Caenorhabditis elegans protein is V-type proton ATPase subunit S1.